Reading from the N-terminus, the 621-residue chain is Chaperone protein HscA homolog (621 aa).

This sequence belongs to the heat shock protein 70 family.

In terms of biological role, chaperone involved in the maturation of iron-sulfur cluster-containing proteins. Has a low intrinsic ATPase activity which is markedly stimulated by HscB. In Acidithiobacillus ferrooxidans (strain ATCC 23270 / DSM 14882 / CIP 104768 / NCIMB 8455) (Ferrobacillus ferrooxidans (strain ATCC 23270)), this protein is Chaperone protein HscA homolog.